Consider the following 315-residue polypeptide: Olfactory receptor 3A1 (315 aa).

The Extracellular segment spans residues 1-28 (MQPESGANGTVIAEFILLGLLEAPGLQP). N-linked (GlcNAc...) asparagine glycosylation is present at asparagine 8. Residues 29–52 (VVFVLFLFAYLVTVRGNLSILAAV) traverse the membrane as a helical segment. Residues 53–60 (LVEPKLHT) lie on the Cytoplasmic side of the membrane. A helical membrane pass occupies residues 61-82 (PMYFFLGNLSVLDVGCISVTVP). The Extracellular portion of the chain corresponds to 83–103 (SMLSRLLSRKRAVPCGACLTQ). Cysteine 100 and cysteine 192 form a disulfide bridge. Residues 104–123 (LFFFHLFVGVDCFLLTAMAY) form a helical membrane-spanning segment. Residues 124 to 143 (DRFLAICRPLTYSTRMSQTV) are Cytoplasmic-facing. Residues 144–161 (QRMLVAASWACAFTNALT) form a helical membrane-spanning segment. The Extracellular segment spans residues 162–199 (HTVAMSTLNFCGPNVINHFYCDLPQLFQLSCSSTQLNE). A helical transmembrane segment spans residues 200–223 (LLLFAVGFIMAGTPMALIVISYIH). Over 224-240 (VAAAVLRIRSVEGRKKA) the chain is Cytoplasmic. Residues 241-264 (FSTCGSHLTVVAIFYGSGIFNYMR) form a helical membrane-spanning segment. Residues 265 to 275 (LGSTKLSDKDK) are Extracellular-facing. The chain crosses the membrane as a helical span at residues 276 to 295 (AVGIFNTVINPMLNPIIYSF). Topologically, residues 296–315 (RNPDVQSAIWRMLTGRRSLA) are cytoplasmic.

This sequence belongs to the G-protein coupled receptor 1 family.

It is found in the cell membrane. Functionally, odorant receptor. The chain is Olfactory receptor 3A1 (OR3A1) from Homo sapiens (Human).